The sequence spans 328 residues: Probable fused nickel transport protein LarMN (328 aa).

A run of 8 helical transmembrane segments spans residues 8 to 28 (LSPA…TVAV), 42 to 62 (LPML…NLPI), 75 to 95 (LLAV…TLLL), 103 to 123 (GGIL…PFVG), 138 to 158 (LGLA…AGIE), 187 to 207 (MLTA…LLVF), 229 to 249 (PWIA…LASN), and 296 to 316 (PVSV…LLLI).

The protein belongs to the CbiM family. NikM subfamily. In terms of assembly, may form an energy-coupling factor (ECF) transporter complex composed of an ATP-binding protein (A component, LarO), a transmembrane protein (T component, LarQ) and a fused possible substrate-capture protein (S component, LarMN) of unknown stoichiometry.

Its subcellular location is the cell membrane. Its function is as follows. Probably part of the energy-coupling factor (ECF) transporter complex LarMNQO involved in nickel import. The sequence is that of Probable fused nickel transport protein LarMN from Lactiplantibacillus plantarum (strain ATCC BAA-793 / NCIMB 8826 / WCFS1) (Lactobacillus plantarum).